We begin with the raw amino-acid sequence, 220 residues long: CDP-diacylglycerol--inositol 3-phosphatidyltransferase (220 aa).

At Met1–Pro20 the chain is on the cytoplasmic side. A helical transmembrane segment spans residues Asn21–His41. The Lumenal segment spans residues Pro42–Phe45. Residues Thr46–Tyr66 form a helical membrane-spanning segment. 2 residues coordinate Mg(2+): Asp56 and Asp59. Positions 60, 64, and 70 each coordinate a CDP-1,2-diacyl-sn-glycerol. At Asn67–Val75 the chain is on the cytoplasmic side. The helical transmembrane segment at Leu76 to Tyr96 threads the bilayer. Residues Asp77 and Asp81 each coordinate Mg(2+). Residue Asp81 is the Proton acceptor of the active site. The Lumenal segment spans residues Pro97–Gln98. A helical membrane pass occupies residues Trp99–Tyr119. The Cytoplasmic portion of the chain corresponds to Ala120–Thr145. The chain crosses the membrane as a helical span at residues Arg146 to Leu166. Residues Gln167–Ser170 lie on the Lumenal side of the membrane. The chain crosses the membrane as a helical span at residues Asn171–Gln191. At Thr192–Tyr220 the chain is on the cytoplasmic side.

It belongs to the CDP-alcohol phosphatidyltransferase class-I family. The cofactor is Mn(2+). Mg(2+) is required as a cofactor.

The protein resides in the microsome membrane. Its subcellular location is the endoplasmic reticulum membrane. The protein localises to the golgi apparatus membrane. It is found in the mitochondrion outer membrane. The catalysed reaction is a CDP-1,2-diacyl-sn-glycerol + myo-inositol = a 1,2-diacyl-sn-glycero-3-phospho-(1D-myo-inositol) + CMP + H(+). Functionally, catalyzes the synthesis of phosphatidylinositol (PtdIns). The sequence is that of CDP-diacylglycerol--inositol 3-phosphatidyltransferase from Saccharomyces cerevisiae (strain ATCC 204508 / S288c) (Baker's yeast).